Here is a 386-residue protein sequence, read N- to C-terminus: Succinate--CoA ligase [ADP-forming] subunit beta (386 aa).

ATP contacts are provided by K46, E99, A102, and E107. Mg(2+) contacts are provided by N199 and D213. Residues N264 and 321 to 323 contribute to the substrate site; that span reads GIM.

This sequence belongs to the succinate/malate CoA ligase beta subunit family. Heterotetramer of two alpha and two beta subunits. Mg(2+) is required as a cofactor.

It catalyses the reaction succinate + ATP + CoA = succinyl-CoA + ADP + phosphate. It carries out the reaction GTP + succinate + CoA = succinyl-CoA + GDP + phosphate. It participates in carbohydrate metabolism; tricarboxylic acid cycle; succinate from succinyl-CoA (ligase route): step 1/1. Its function is as follows. Succinyl-CoA synthetase functions in the citric acid cycle (TCA), coupling the hydrolysis of succinyl-CoA to the synthesis of either ATP or GTP and thus represents the only step of substrate-level phosphorylation in the TCA. The beta subunit provides nucleotide specificity of the enzyme and binds the substrate succinate, while the binding sites for coenzyme A and phosphate are found in the alpha subunit. In Orientia tsutsugamushi (strain Ikeda) (Rickettsia tsutsugamushi), this protein is Succinate--CoA ligase [ADP-forming] subunit beta.